A 499-amino-acid chain; its full sequence is Potassium channel subfamily K member 5 (499 aa).

Residues 1–7 (MVDRGPL) are Cytoplasmic-facing. The helical transmembrane segment at 8–26 (LTSAIIFYLAIGAAIFEVL) threads the bilayer. A glycan (N-linked (GlcNAc...) asparagine) is linked at N77. An intramembrane region (pore-forming) is located at residues 85–112 (WPNAMIFAATVITTIGYGNVAPKTPAGR). Residues T98, I99, G100, and Y101 each coordinate K(+). The interval 98–103 (TIGYGN) is selectivity filter 1. Residues 113–133 (LFCVFYGLFGVPLCLTWISAL) traverse the membrane as a helical segment. Residues 134–157 (GKFFGGRAKRLGQFLTKRGVSLRK) lie on the Cytoplasmic side of the membrane. The chain crosses the membrane as a helical span at residues 158–180 (AQITCTVIFIVWGVLVHLVIPPF). Positions 190-215 (YIEGLYYSFITISTIGFGDFVAGVNP) form an intramembrane region, pore-forming. K(+) contacts are provided by T203, I204, G205, and F206. A selectivity filter 2 region spans residues 203–208 (TIGFGD). A helical membrane pass occupies residues 230-250 (WIYLGLAWLSLFVNWKVSMFV). At 251-325 (EVHKAIKKRR…SGGGETGPGP (75 aa)) the chain is on the cytoplasmic side. Disordered regions lie at residues 312–335 (AMKT…GGLP), 360–388 (QTLR…SPAP), and 428–499 (GLSD…PKGT). The segment covering 316 to 334 (SGGGETGPGPGLGPQGGGL) has biased composition (gly residues). Over residues 370-382 (RSPDEEAVARAPE) the composition is skewed to basic and acidic residues. S371 bears the Phosphoserine mark. Positions 466–480 (SSSESTFTSTESELS) are enriched in low complexity.

This sequence belongs to the two pore domain potassium channel (TC 1.A.1.8) family. In terms of assembly, homodimer; disulfide-linked. Heterodimer with KCNK16 and KCNK17. As to expression, abundant expression in kidney, also detected in liver, placenta and small intestine. In the kidney, expression is restricted to the distal tubules and collecting ducts. Not expressed in proximal tubules or glomeruli. Expressed in pancreas, in both endocrine (alpha, beta, gamma, delta, and epsilon) and exocrine (acinar and ductal) cells.

It is found in the membrane. The catalysed reaction is K(+)(in) = K(+)(out). The channel conductance is stimulated by extracellular alkaline pH. Inhibited by quinine, quinidine and external acidification. Functionally, k(+) channel that conducts voltage-dependent outward rectifying currents upon membrane depolarization. Voltage sensing is coupled to K(+) electrochemical gradient in an 'ion flux gating' mode where outward but not inward ion flow opens the gate. Homo- and heterodimerizes to form functional channels with distinct regulatory and gating properties. The protein is Potassium channel subfamily K member 5 of Homo sapiens (Human).